The primary structure comprises 284 residues: D-tagatose-1,6-bisphosphate aldolase subunit GatY (284 aa).

Catalysis depends on aspartate 82, which acts as the Proton donor. Histidine 83 and histidine 180 together coordinate Zn(2+). Glycine 181 is a binding site for dihydroxyacetone phosphate. Histidine 208 contributes to the Zn(2+) binding site. Residues 209–211 (GAS) and 230–233 (NVAT) each bind dihydroxyacetone phosphate.

Belongs to the class II fructose-bisphosphate aldolase family. TagBP aldolase GatY subfamily. In terms of assembly, forms a complex with GatZ. It depends on Zn(2+) as a cofactor.

It catalyses the reaction D-tagatofuranose 1,6-bisphosphate = D-glyceraldehyde 3-phosphate + dihydroxyacetone phosphate. It functions in the pathway carbohydrate metabolism; D-tagatose 6-phosphate degradation; D-glyceraldehyde 3-phosphate and glycerone phosphate from D-tagatose 6-phosphate: step 2/2. Catalytic subunit of the tagatose-1,6-bisphosphate aldolase GatYZ, which catalyzes the reversible aldol condensation of dihydroxyacetone phosphate (DHAP or glycerone-phosphate) with glyceraldehyde 3-phosphate (G3P) to produce tagatose 1,6-bisphosphate (TBP). Requires GatZ subunit for full activity and stability. Is involved in the catabolism of galactitol. This is D-tagatose-1,6-bisphosphate aldolase subunit GatY from Escherichia coli O17:K52:H18 (strain UMN026 / ExPEC).